The following is a 55-amino-acid chain: U2-theraphotoxin-Cg1a (55 aa).

Positions 1–19 (DSPAWLKSMERIFQSEERE) are excised as a propeptide. 3 cysteine pairs are disulfide-bonded: cysteine 20–cysteine 34, cysteine 27–cysteine 39, and cysteine 33–cysteine 47.

Belongs to the neurotoxin 10 (Hwtx-1) family. 06 (F4b) subfamily. As to expression, expressed by the venom gland.

The protein localises to the secreted. Probable ion channel inhibitor. This Chilobrachys guangxiensis (Chinese earth tiger tarantula) protein is U2-theraphotoxin-Cg1a.